A 1085-amino-acid chain; its full sequence is Error-prone DNA polymerase (1085 aa).

The protein belongs to the DNA polymerase type-C family. DnaE2 subfamily.

It localises to the cytoplasm. The enzyme catalyses DNA(n) + a 2'-deoxyribonucleoside 5'-triphosphate = DNA(n+1) + diphosphate. In terms of biological role, DNA polymerase involved in damage-induced mutagenesis and translesion synthesis (TLS). It is not the major replicative DNA polymerase. The polypeptide is Error-prone DNA polymerase (Symbiobacterium thermophilum (strain DSM 24528 / JCM 14929 / IAM 14863 / T)).